The chain runs to 543 residues: CTP synthase (543 aa).

An amidoligase domain region spans residues Met1–Leu265. Ser13 contacts CTP. Residue Ser13 coordinates UTP. Residues Ser14–Ile19 and Asp71 each bind ATP. The Mg(2+) site is built by Asp71 and Glu139. Residues Asp146–Glu148, Lys186–Gln191, and Lys222 contribute to the CTP site. UTP-binding positions include Lys186 to Gln191 and Lys222. Positions Thr290–Lys541 constitute a Glutamine amidotransferase type-1 domain. Residue Gly351 coordinates L-glutamine. Cys378 serves as the catalytic Nucleophile; for glutamine hydrolysis. L-glutamine-binding positions include Leu379–Gln382, Glu402, and Arg469. Catalysis depends on residues His514 and Glu516.

It belongs to the CTP synthase family. As to quaternary structure, homotetramer.

It carries out the reaction UTP + L-glutamine + ATP + H2O = CTP + L-glutamate + ADP + phosphate + 2 H(+). It catalyses the reaction L-glutamine + H2O = L-glutamate + NH4(+). The enzyme catalyses UTP + NH4(+) + ATP = CTP + ADP + phosphate + 2 H(+). It participates in pyrimidine metabolism; CTP biosynthesis via de novo pathway; CTP from UDP: step 2/2. With respect to regulation, allosterically activated by GTP, when glutamine is the substrate; GTP has no effect on the reaction when ammonia is the substrate. The allosteric effector GTP functions by stabilizing the protein conformation that binds the tetrahedral intermediate(s) formed during glutamine hydrolysis. Inhibited by the product CTP, via allosteric rather than competitive inhibition. Functionally, catalyzes the ATP-dependent amination of UTP to CTP with either L-glutamine or ammonia as the source of nitrogen. Regulates intracellular CTP levels through interactions with the four ribonucleotide triphosphates. This is CTP synthase from Ectopseudomonas mendocina (strain ymp) (Pseudomonas mendocina).